A 186-amino-acid chain; its full sequence is Putative manganese efflux pump MntP (186 aa).

The next 6 membrane-spanning stretches (helical) occupy residues 1–21, 41–61, 71–91, 105–125, 130–150, and 165–185; these read MSFL…FAVS, VFFG…GSAV, WIAF…ALYG, LLML…SFAF, ILEP…CGAV, and IIGG…HLLW.

The protein belongs to the MntP (TC 9.B.29) family.

Its subcellular location is the cell membrane. Probably functions as a manganese efflux pump. The polypeptide is Putative manganese efflux pump MntP (Methanosarcina barkeri (strain Fusaro / DSM 804)).